The primary structure comprises 208 residues: MTEQAITAAQMRAKDQFTINQIGIPSLVLMERASLAVRDAILTHYPAANKIVVVAGQGNNGGDGLAIARLLHVAGRGVAILTIGNSAHASSEHQTQAHICDYYQIPVASDPALLKDADLIIDAIFGIGIDRPVEGAYATVIKQVNAAHAPVVAVDVPSGINTDTGAVMGVAVKADLTVTFSYNKTGLVTDQGQAYAGRVIVADDMGTY.

Positions 11-208 (MRAKDQFTIN…VIVADDMGTY (198 aa)) constitute a YjeF N-terminal domain. 59–63 (NNGGD) is a binding site for (6S)-NADPHX. K(+)-binding residues include N60 and D122. (6S)-NADPHX is bound by residues 126 to 132 (GIGIDRP), Y137, and D155. S158 lines the K(+) pocket.

The protein belongs to the NnrE/AIBP family. K(+) is required as a cofactor.

It catalyses the reaction (6R)-NADHX = (6S)-NADHX. It carries out the reaction (6R)-NADPHX = (6S)-NADPHX. In terms of biological role, catalyzes the epimerization of the S- and R-forms of NAD(P)HX, a damaged form of NAD(P)H that is a result of enzymatic or heat-dependent hydration. This is a prerequisite for the S-specific NAD(P)H-hydrate dehydratase to allow the repair of both epimers of NAD(P)HX. The chain is NAD(P)H-hydrate epimerase from Limosilactobacillus fermentum (strain NBRC 3956 / LMG 18251) (Lactobacillus fermentum).